We begin with the raw amino-acid sequence, 84 residues long: Chymotrypsin inhibitor Ani s 6 (84 aa).

The signal sequence occupies residues 1 to 22 (MFQSTFFLVLMVCVATARFANK). Cystine bridges form between cysteine 25-cysteine 58, cysteine 34-cysteine 54, cysteine 38-cysteine 50, cysteine 42-cysteine 79, and cysteine 60-cysteine 73. The TIL domain occupies 25–79 (CPPNEEYNECGNPCQEKCDNGEPVICTYQCEHRCFCKQGYVRLTEDGECVPEEFC).

It belongs to the serine protease inhibitor-like (TIL domain-containing) family.

The protein resides in the secreted. In terms of biological role, inhibits alpha-chymotrypsin, but not trypsin. The sequence is that of Chymotrypsin inhibitor Ani s 6 from Anisakis simplex (Herring worm).